The following is a 736-amino-acid chain: Catalase-peroxidase (736 aa).

The signal sequence occupies residues 1-21; that stretch reads MFKKTILSFVISAVMVTAASA. The tryptophyl-tyrosyl-methioninium (Trp-Tyr) (with M-250) cross-link spans 102 to 224; that stretch reads WHAAGTYRTH…LAAVEMGLIY (123 aa). His103 serves as the catalytic Proton acceptor. A cross-link (tryptophyl-tyrosyl-methioninium (Tyr-Met) (with W-102)) is located at residues 224-250; the sequence is YVNPVGPHGNPDPLLAANDIRMSFGRM. Heme b is bound at residue His265.

This sequence belongs to the peroxidase family. Peroxidase/catalase subfamily. Homodimer or homotetramer. It depends on heme b as a cofactor. Formation of the three residue Trp-Tyr-Met cross-link is important for the catalase, but not the peroxidase activity of the enzyme.

It catalyses the reaction H2O2 + AH2 = A + 2 H2O. The catalysed reaction is 2 H2O2 = O2 + 2 H2O. Functionally, bifunctional enzyme with both catalase and broad-spectrum peroxidase activity. This is Catalase-peroxidase from Shewanella woodyi (strain ATCC 51908 / MS32).